The chain runs to 842 residues: TATA box-binding protein-associated factor, RNA polymerase I, subunit C (842 aa).

Disordered stretches follow at residues 574–605 (SSLR…PSWT), 667–690 (RPGD…QQDE), and 702–842 (QAAA…RMGF). The segment covering 577 to 588 (REPDHPAPERPA) has biased composition (basic and acidic residues). Residues 745–760 (DASSAPHSQDLSNSEA) show a composition bias toward polar residues. A compositionally biased stretch (basic and acidic residues) spans 783–794 (QHERRQTLRDYM). Thr808 is subject to Phosphothreonine. A compositionally biased stretch (low complexity) spans 809–826 (PPSQTSSRQTRSFRQQTP). Residues 833–842 (PPRKKPRMGF) are compositionally biased toward basic residues.

As to quaternary structure, component of the transcription factor SL1/TIF-IB complex, composed of TBP and at least TAF1A, TAF1B, TAF1C and TAF1D. In the complex interacts directly with TBP, TAF1A and TAF1B. Interaction of the SL1/TIF-IB subunits with TBP excludes interaction of TBP with the transcription factor IID (TFIID) subunits. Interacts with MYC and RRN3. Interacts with p53/TP53; the interaction prevents the association of SL1/TIF-IB with UBTF and represses RNA polymerase I transcription. Part of Pol I pre-initiation complex (PIC), in which Pol I core assembles with RRN3 and promoter-bound UTBF and SL1/TIF-IB complex.

It localises to the nucleus. It is found in the nucleolus. Functionally, component of the transcription factor SL1/TIF-IB complex, which is involved in the assembly of the PIC (pre-initiation complex) during RNA polymerase I-dependent transcription. The rate of PIC formation probably is primarily dependent on the rate of association of SL1/TIF-IB with the rDNA promoter. SL1/TIF-IB is involved in stabilization of nucleolar transcription factor 1/UBTF on rDNA. Formation of SL1/TIF-IB excludes the association of TBP with TFIID subunits. Recruits RNA polymerase I to the rRNA gene promoter via interaction with RRN3. The sequence is that of TATA box-binding protein-associated factor, RNA polymerase I, subunit C (Taf1c) from Rattus norvegicus (Rat).